The following is a 380-amino-acid chain: Putative 8-amino-7-oxononanoate synthase (380 aa).

Residue arginine 18 coordinates substrate. Residue 106–107 participates in pyridoxal 5'-phosphate binding; it reads GY. Histidine 131 contributes to the substrate binding site. Pyridoxal 5'-phosphate-binding positions include serine 179, 205–208, and 236–239; these read DEAH and TFGK. Lysine 239 is subject to N6-(pyridoxal phosphate)lysine. A substrate-binding site is contributed by threonine 352.

The protein belongs to the class-II pyridoxal-phosphate-dependent aminotransferase family. BioF subfamily. Homodimer. The cofactor is pyridoxal 5'-phosphate.

It carries out the reaction 6-carboxyhexanoyl-[ACP] + L-alanine + H(+) = (8S)-8-amino-7-oxononanoate + holo-[ACP] + CO2. The protein operates within cofactor biosynthesis; biotin biosynthesis. Its function is as follows. Catalyzes the decarboxylative condensation of pimeloyl-[acyl-carrier protein] and L-alanine to produce 8-amino-7-oxononanoate (AON), [acyl-carrier protein], and carbon dioxide. This Haemophilus influenzae (strain ATCC 51907 / DSM 11121 / KW20 / Rd) protein is Putative 8-amino-7-oxononanoate synthase (bioF).